The following is a 286-amino-acid chain: Zinc finger protein ZAT5 (286 aa).

Disordered stretches follow at residues 1 to 28 (MMMG…RSSS), 40 to 60 (STSS…EYNS), and 131 to 171 (GGHR…FKVS). The segment at 115–137 (YECKTCNRTFSSFQALGGHRASH) adopts a C2H2-type 1 zinc-finger fold. Residues 154-171 (QPKSSASEEGQNSHFKVS) are compositionally biased toward polar residues. Residues 190 to 212 (HECSICGSEFTSGQALGGHMRRH) form a C2H2-type 2 zinc finger.

Expressed in flowers and siliques.

The protein localises to the nucleus. Probable transcription factor that may be involved in stress responses. In Arabidopsis thaliana (Mouse-ear cress), this protein is Zinc finger protein ZAT5 (ZAT5).